The chain runs to 238 residues: Uridylate kinase (238 aa).

12-15 provides a ligand contact to ATP; sequence KLSG. An involved in allosteric activation by GTP region spans residues 20–25; that stretch reads GDEGFG. G54 is a binding site for UMP. G55 and R59 together coordinate ATP. Residues D74 and 135–142 contribute to the UMP site; that span reads TGSPFFTT. Positions 162, 168, and 171 each coordinate ATP.

This sequence belongs to the UMP kinase family. In terms of assembly, homohexamer.

It is found in the cytoplasm. The catalysed reaction is UMP + ATP = UDP + ADP. It participates in pyrimidine metabolism; CTP biosynthesis via de novo pathway; UDP from UMP (UMPK route): step 1/1. With respect to regulation, allosterically activated by GTP. Inhibited by UTP. Catalyzes the reversible phosphorylation of UMP to UDP. This is Uridylate kinase from Histophilus somni (strain 129Pt) (Haemophilus somnus).